Consider the following 211-residue polypeptide: FMN-dependent NADH:quinone oxidoreductase 3 (211 aa).

17-19 (SFS) provides a ligand contact to FMN.

The protein belongs to the azoreductase type 1 family. Homodimer. The cofactor is FMN.

It catalyses the reaction 2 a quinone + NADH + H(+) = 2 a 1,4-benzosemiquinone + NAD(+). It carries out the reaction N,N-dimethyl-1,4-phenylenediamine + anthranilate + 2 NAD(+) = 2-(4-dimethylaminophenyl)diazenylbenzoate + 2 NADH + 2 H(+). Quinone reductase that provides resistance to thiol-specific stress caused by electrophilic quinones. Functionally, also exhibits azoreductase activity. Catalyzes the reductive cleavage of the azo bond in aromatic azo compounds to the corresponding amines. The protein is FMN-dependent NADH:quinone oxidoreductase 3 of Halalkalibacterium halodurans (strain ATCC BAA-125 / DSM 18197 / FERM 7344 / JCM 9153 / C-125) (Bacillus halodurans).